A 436-amino-acid chain; its full sequence is ATP-dependent RNA helicase RhlB (436 aa).

Positions 9–37 (QKFADLDLLPQVIEGLEKKGFDYCTPIQA) match the Q motif motif. One can recognise a Helicase ATP-binding domain in the interval 40-219 (LPVLLTGQDI…FEHMHNPEHV (180 aa)). An ATP-binding site is contributed by 53-60 (AQTGTGKT). The DEAD box signature appears at 165-168 (DEAD). One can recognise a Helicase C-terminal domain in the interval 245–390 (ALLQTLIEEE…MSDYDASALL (146 aa)). The tract at residues 398–436 (RLRTRNPQQRRSNNNGPRNGNRKPNQNRRPRQPRHNKEA) is disordered. Low complexity predominate over residues 402–421 (RNPQQRRSNNNGPRNGNRKP). Positions 422–436 (NQNRRPRQPRHNKEA) are enriched in basic residues.

It belongs to the DEAD box helicase family. RhlB subfamily. In terms of assembly, component of the RNA degradosome, which is a multiprotein complex involved in RNA processing and mRNA degradation.

Its subcellular location is the cytoplasm. It catalyses the reaction ATP + H2O = ADP + phosphate + H(+). In terms of biological role, DEAD-box RNA helicase involved in RNA degradation. Has RNA-dependent ATPase activity and unwinds double-stranded RNA. This is ATP-dependent RNA helicase RhlB from Vibrio atlanticus (strain LGP32) (Vibrio splendidus (strain Mel32)).